The following is a 301-amino-acid chain: MYTIAALYHFTRFADPADLKPALLDLCLAQGVKGTLLLAKEGINGTIAGPRAGIDAVLAHIRALPGCSDLEWKEATSDHPPFGKMKVRLKQEIVTMGQPDVDPRARVGHYVEPEDWNDLIRSDDVVLIDTRNDYEVAIGTFEGAIDPMTESFRDFPAWWEANKERFHNKRVAMFCTGGIRCEKSTNYLLGQGVEDVYHLKGGILRYLEEVPAENSTWQGECFVFDNRVSVGHGLVEGPHELCHGCRRPILPEDRNRPEYEHGVSCHLCIDETSEADKMRFRERQKQIALARARGEDHLATH.

In terms of domain architecture, Rhodanese spans 121–215; it reads RSDDVVLIDT…YLEEVPAENS (95 aa). The active-site Cysteine persulfide intermediate is cysteine 175.

It belongs to the TrhO family.

The catalysed reaction is uridine(34) in tRNA + AH2 + O2 = 5-hydroxyuridine(34) in tRNA + A + H2O. In terms of biological role, catalyzes oxygen-dependent 5-hydroxyuridine (ho5U) modification at position 34 in tRNAs. The chain is tRNA uridine(34) hydroxylase from Ruegeria pomeroyi (strain ATCC 700808 / DSM 15171 / DSS-3) (Silicibacter pomeroyi).